The primary structure comprises 509 residues: UDP-N-acetylmuramyl-tripeptide synthetase (509 aa).

124-130 (GTNGKTS) is an ATP binding site. UDP-N-acetyl-alpha-D-muramoyl-L-alanyl-D-glutamate-binding positions include 164–165 (TT), Ser191, and Arg199. Lys231 carries the N6-carboxylysine modification.

Belongs to the MurCDEF family. MurE subfamily. Post-translationally, carboxylation is probably crucial for Mg(2+) binding and, consequently, for the gamma-phosphate positioning of ATP.

The protein localises to the cytoplasm. It participates in cell wall biogenesis; peptidoglycan biosynthesis. Catalyzes the addition of an amino acid to the nucleotide precursor UDP-N-acetylmuramoyl-L-alanyl-D-glutamate (UMAG) in the biosynthesis of bacterial cell-wall peptidoglycan. In Tropheryma whipplei (strain Twist) (Whipple's bacillus), this protein is UDP-N-acetylmuramyl-tripeptide synthetase.